We begin with the raw amino-acid sequence, 416 residues long: Tyrosine--tRNA ligase (416 aa).

Y39 is a binding site for L-tyrosine. The 'HIGH' region motif lies at 44–53 (CTAPSLHAGH). The L-tyrosine site is built by Y176 and Q180. The 'KMSKS' region signature appears at 236-240 (KMGKT). ATP is bound at residue K239. An S4 RNA-binding domain is found at 349–414 (ISLVDLLHDT…AGKKRHIKVV (66 aa)).

This sequence belongs to the class-I aminoacyl-tRNA synthetase family. TyrS type 1 subfamily. Homodimer.

It localises to the cytoplasm. It catalyses the reaction tRNA(Tyr) + L-tyrosine + ATP = L-tyrosyl-tRNA(Tyr) + AMP + diphosphate + H(+). Its function is as follows. Catalyzes the attachment of tyrosine to tRNA(Tyr) in a two-step reaction: tyrosine is first activated by ATP to form Tyr-AMP and then transferred to the acceptor end of tRNA(Tyr). This Wolbachia pipientis wMel protein is Tyrosine--tRNA ligase.